The following is a 270-amino-acid chain: 5'-AMP-activated protein kinase subunit beta-1 (270 aa).

The tract at residues 1-43 (MGNTSSERAALERHGGHKTPRRDSSGGTKDGDRPKILMDSPED) is disordered. Gly2 carries N-myristoyl glycine lipidation. The residue at position 4 (Thr4) is a Phosphothreonine. Phosphoserine is present on residues Ser5 and Ser6. Residue Thr19 is modified to Phosphothreonine. The span at 21-36 (RRDSSGGTKDGDRPKI) shows a compositional bias: basic and acidic residues. 2 positions are modified to phosphoserine; by autocatalysis: Ser24 and Ser25. A phosphoserine mark is found at Ser40, Ser96, Ser101, and Ser108. The segment at 68-163 (EVNDKAPAQA…QVKKTDFEVF (96 aa)) is glycogen-binding domain. Phosphothreonine is present on Thr148. At Ser182 the chain carries Phosphoserine.

Belongs to the 5'-AMP-activated protein kinase beta subunit family. In terms of assembly, AMPK is a heterotrimer of an alpha catalytic subunit (PRKAA1 or PRKAA2), a beta (PRKAB1 or PRKAB2) and a gamma non-catalytic subunits (PRKAG1, PRKAG2 or PRKAG3). Interacts with FNIP1 and FNIP2. Phosphorylated when associated with the catalytic subunit (PRKAA1 or PRKAA2). Phosphorylated by ULK1; leading to negatively regulate AMPK activity and suggesting the existence of a regulatory feedback loop between ULK1 and AMPK.

Its function is as follows. Non-catalytic subunit of AMP-activated protein kinase (AMPK), an energy sensor protein kinase that plays a key role in regulating cellular energy metabolism. In response to reduction of intracellular ATP levels, AMPK activates energy-producing pathways and inhibits energy-consuming processes: inhibits protein, carbohydrate and lipid biosynthesis, as well as cell growth and proliferation. AMPK acts via direct phosphorylation of metabolic enzymes, and by longer-term effects via phosphorylation of transcription regulators. Also acts as a regulator of cellular polarity by remodeling the actin cytoskeleton; probably by indirectly activating myosin. Beta non-catalytic subunit acts as a scaffold on which the AMPK complex assembles, via its C-terminus that bridges alpha (PRKAA1 or PRKAA2) and gamma subunits (PRKAG1, PRKAG2 or PRKAG3). The polypeptide is 5'-AMP-activated protein kinase subunit beta-1 (PRKAB1) (Homo sapiens (Human)).